The chain runs to 266 residues: Gasdermin bGSDM (266 aa).

4 beta stranded membrane-spanning segments follow: residues 67 to 83, 95 to 113, 162 to 179, and 187 to 203; these read LQQN…GVDI, KLRG…ISYQ, SFSV…DLEA, and ADVN…LMEY.

It belongs to the bacterial gasdermin family. Monomer. In terms of assembly, forms large, homooligomeric ring-shaped pores when inserted in membranes.

The protein localises to the cytoplasm. Its subcellular location is the cell inner membrane. Its activity is regulated as follows. The full-length protein before cleavage is inactive: intramolecular interactions between the N-terminal domain and the C-terminal region mediate autoinhibition. The pyroptosis-like-inducing activity is carried by the released N-terminal domain (Gasdermin bGSDM, N-terminus). Functionally, precursor of a pore-forming protein involved in defense against bacteriophages. Expression of bGSDM and the neighboring protease gene (Gilli_2517) is not toxic in E.coli. Cleavage of this precursor by its dedicated protease releases the active moiety (gasdermin bGSDM, N-terminus) which inserts into membranes, forming pores and triggering cell death. Pore-forming protein that causes membrane permeabilization via a pyroptosis-like activity. Makes ring-like pores when released. The protein is Gasdermin bGSDM of Gillisia limnaea (strain DSM 15749 / LMG 21470 / R-8282).